The following is a 329-amino-acid chain: GTPase Obg (329 aa).

Positions 1–159 (MQFIDQARIT…WPLQLELKLL (159 aa)) constitute an Obg domain. Residues 160-328 (AEVGIIGLPN…LLDQVWQLLG (169 aa)) enclose the OBG-type G domain. ATP is bound by residues 166–173 (GLPNAGKS), 191–195 (FTTLV), 213–216 (DIPG), 280–283 (NKLE), and 309–311 (SAV). Mg(2+) contacts are provided by Ser-173 and Thr-193.

The protein belongs to the TRAFAC class OBG-HflX-like GTPase superfamily. OBG GTPase family. Monomer. Mg(2+) is required as a cofactor.

Its subcellular location is the cytoplasm. Functionally, an essential GTPase which binds GTP, GDP and possibly (p)ppGpp with moderate affinity, with high nucleotide exchange rates and a fairly low GTP hydrolysis rate. Plays a role in control of the cell cycle, stress response, ribosome biogenesis and in those bacteria that undergo differentiation, in morphogenesis control. The sequence is that of GTPase Obg from Synechococcus sp. (strain WH7803).